A 109-amino-acid chain; its full sequence is Protein E7 (109 aa).

An E7 terminal domain region spans residues 1–41; it reads MRGPKPTLQEIVLDLCPYNEIQPVDLVCHEQLGESEDEIDE. The short motif at 26–30 is the LXCXE motif; interaction with host RB1 and TMEM173/STING element; sequence LVCHE. A zinc finger spans residues 68–104; that stretch reads CCKCNNTLQLVVEASRDTLRQLQQLFMDSLGFVCPWC. Residues 86–94 carry the Nuclear export signal motif; sequence LRQLQQLFM.

It belongs to the papillomaviridae E7 protein family. In terms of assembly, homodimer. Homooligomer. Interacts with host RB1; this interaction induces dissociation of RB1-E2F1 complex thereby disrupting RB1 activity. Interacts with host EP300; this interaction represses EP300 transcriptional activity. Interacts with protein E2; this interaction inhibits E7 oncogenic activity. Interacts with host TMEM173/STING; this interaction impairs the ability of TMEM173/STING to sense cytosolic DNA and promote the production of type I interferon (IFN-alpha and IFN-beta). In terms of processing, highly phosphorylated.

It localises to the host cytoplasm. Its subcellular location is the host nucleus. Its function is as follows. Plays a role in viral genome replication by driving entry of quiescent cells into the cell cycle. Stimulation of progression from G1 to S phase allows the virus to efficiently use the cellular DNA replicating machinery to achieve viral genome replication. E7 protein has both transforming and trans-activating activities. Induces the disassembly of the E2F1 transcription factor from RB1, with subsequent transcriptional activation of E2F1-regulated S-phase genes. Interferes with host histone deacetylation mediated by HDAC1 and HDAC2, leading to transcription activation. Also plays a role in the inhibition of both antiviral and antiproliferative functions of host interferon alpha. Interaction with host TMEM173/STING impairs the ability of TMEM173/STING to sense cytosolic DNA and promote the production of type I interferon (IFN-alpha and IFN-beta). This chain is Protein E7, found in Human papillomavirus 39.